The following is a 547-amino-acid chain: Natural resistance-associated macrophage protein 1 (547 aa).

Residues 1–30 (MTGDKDPQSVSRPNYGSISHPPSSEPQQEP) form a disordered region. At 1–54 (MTGDKDPQSVSRPNYGSISHPPSSEPQQEPLRTTYLSEKIPIPDTEPGTFSLRK) the chain is on the cytoplasmic side. The span at 8–17 (QSVSRPNYGS) shows a compositional bias: polar residues. Low complexity predominate over residues 21–30 (PPSSEPQQEP). The chain crosses the membrane as a helical span at residues 55-75 (LWAFTGPGFLMSIAFLDPGNI). The Extracellular segment spans residues 76–81 (ESDLQA). Residues 82–102 (GAVAGFKLLWVLLWATVLGLL) traverse the membrane as a helical segment. Topologically, residues 103–139 (CQRLAARLGVVTGKDLGEICHLYYPKVPRTLLWLTIE) are cytoplasmic. Residues 140–160 (LAIVGSDMQEVIGTAIAFSLL) traverse the membrane as a helical segment. Topologically, residues 161–164 (SAGR) are extracellular. A helical membrane pass occupies residues 165–185 (IPLWGGVLITIVDTFFFLFLD). Residues 186–193 (NYGLRKLE) are Cytoplasmic-facing. Residues 194-214 (AFFGILITIMALTFGYEYVVA) traverse the membrane as a helical segment. Residues 215-240 (RPAQVALLQGLLLPSCPGCGRPELLQ) lie on the Extracellular side of the membrane. A helical transmembrane segment spans residues 241–261 (AVGIVGAIIMPHNIYLHSALV). Topologically, residues 262 to 286 (KSREIDRSRRPDIREANMYFLIEAS) are cytoplasmic. The helical transmembrane segment at 287 to 307 (IALSVSFFINLFVVAVFGQAF) threads the bilayer. Residues 308 to 346 (YQQTNEAAFNVCANSSLHDYAKIFPRNNLTVEVDIYQGG) lie on the Extracellular side of the membrane. 2 N-linked (GlcNAc...) asparagine glycosylation sites follow: asparagine 321 and asparagine 335. The chain crosses the membrane as a helical span at residues 347–367 (VMLGCVFGPAALYIWAVGLLA). The Cytoplasmic segment spans residues 368 to 394 (AGQSSTMTGTYAGQFVMEGFLRLRWSR). The chain crosses the membrane as a helical span at residues 395–415 (FARVLLTRSCAILPTVLVVVF). Over 416–432 (RDLKDLSGLNDLLNVLQ) the chain is Extracellular. Residues 433-453 (SLLLPFAVLPILTFTSMPALM) form a helical membrane-spanning segment. At 454–464 (QEFANGRLSKA) the chain is on the cytoplasmic side. Residues 465–485 (ITSFIMALVCAINLYFVVIYL) traverse the membrane as a helical segment. Topologically, residues 486 to 492 (PSLPHPA) are extracellular. Residues 493 to 513 (YFILVALLAIVYLGLTTYLVW) form a helical membrane-spanning segment. The Cytoplasmic portion of the chain corresponds to 514 to 547 (TCFIAHGVTLLAHSSHQHFLYGLPDVEEKGKISG).

It belongs to the NRAMP family.

The protein localises to the late endosome membrane. Its subcellular location is the lysosome membrane. The catalysed reaction is Zn(2+)(in) + H(+)(out) = Zn(2+)(out) + H(+)(in). The enzyme catalyses Fe(2+)(in) + H(+)(out) = Fe(2+)(out) + H(+)(in). It carries out the reaction Mn(2+)(in) + H(+)(out) = Mn(2+)(out) + H(+)(in). Macrophage-specific antiporter that fluxes metal ions in either direction against a proton gradient. Localized to late endosomal lysosomal membranes, delivers bivalent cations from the cytosol into these acidic compartments where they may directly affect antimicrobial activity. Involved in iron metabolism and host natural resistance to infection with intracellular parasites. Pathogen resistance involves sequestration of Fe(2+) and Mn(2+), cofactors of both prokaryotic and eukaryotic catalases and superoxide dismutases, not only to protect the macrophage against its own generation of reactive oxygen species, but to deny the cations to the pathogen for synthesis of its protective enzymes. The sequence is that of Natural resistance-associated macrophage protein 1 (SLC11A1) from Canis lupus familiaris (Dog).